Consider the following 197-residue polypeptide: Recombination protein RecR (197 aa).

The segment at 56–71 (CSRCFNLSAEDPCDIC) adopts a C4-type zinc-finger fold. In terms of domain architecture, Toprim spans 79–174 (ETICVVAEPR…RVTRIAFGLP (96 aa)).

This sequence belongs to the RecR family.

Its function is as follows. May play a role in DNA repair. It seems to be involved in an RecBC-independent recombinational process of DNA repair. It may act with RecF and RecO. This chain is Recombination protein RecR, found in Gloeobacter violaceus (strain ATCC 29082 / PCC 7421).